The following is a 310-amino-acid chain: Prohibitin-2 (310 aa).

The helical; Signal-anchor for type II membrane protein transmembrane segment at 38 to 58 (FAGLGGLLLLGGGALFINNAL) threads the bilayer. The interval 130 to 144 (DVVQLPTIYRTLGQD) is interaction with ATG8. The short motif at 138-141 (YRTL) is the AIM element. The stretch at 212-253 (NAVEAKQIAQQDAQRAAFVVDKARQEKQGMVVRAQGEAKSAE) forms a coiled coil.

This sequence belongs to the prohibitin family. The mitochondrial prohibitin complex consists of two subunits (PHB1 and PHB2). The subunits assemble into a membrane-associated ring-shaped supercomplex of approximately 1 mDa. The mitochondrial prohibitin complex interacts with the m-AAA protease, a heterohexamer composed of YTA12/RCA1 and YTA10/AFG3. The mitochondrial prohibitin complex interacts with ATG8 and the interaction may support mitophagosome assembly. In terms of processing, the N-terminus is blocked.

It localises to the mitochondrion inner membrane. Functionally, prohibitin probably acts as a holdase/unfoldase for the stabilization of newly synthesized mitochondrial proteins. Involved in mitophagy; may act as an adapter for ATG8 that supports mitophagosome assembly. Negatively regulates the proteolytic processing of ATG32 via the i-AAA protease. Acts as a negative regulator of the m-AAA protease. This is Prohibitin-2 (PHB2) from Saccharomyces cerevisiae (strain ATCC 204508 / S288c) (Baker's yeast).